A 60-amino-acid polypeptide reads, in one-letter code: Potassium channel toxin alpha-KTx 29.3 (60 aa).

An N-terminal signal peptide occupies residues 1-28 (MKSVCGVLIILVVLTTMLSISTFSTVGA). Intrachain disulfides connect Cys-32/Cys-51, Cys-40/Cys-56, and Cys-44/Cys-58.

It belongs to the short scorpion toxin superfamily. Potassium channel inhibitor family. Alpha-KTx 29 subfamily. In terms of tissue distribution, expressed by the venom gland.

It localises to the secreted. Weakly inhibits the Kv1.3/KCNA3 channel (1 uM of thetoxin inhibits currents by 13.2%) and Kv7.1/KCNQ1 channel (10 uM of the toxin inhibits currents by 27.7%). This chain is Potassium channel toxin alpha-KTx 29.3, found in Lychas mucronatus (Chinese swimming scorpion).